A 647-amino-acid polypeptide reads, in one-letter code: Type II methyltransferase M.FokI (647 aa).

Short sequence motifs (adenine-specific methylase) lie at residues 218-221 (DPPY) and 548-551 (DPPY).

Belongs to the N(4)/N(6)-methyltransferase family. Monomer.

It carries out the reaction a 2'-deoxyadenosine in DNA + S-adenosyl-L-methionine = an N(6)-methyl-2'-deoxyadenosine in DNA + S-adenosyl-L-homocysteine + H(+). An alpha subtype methylase that recognizes the asymmetric double-stranded sequence 5'-GGATG-3', methylates A-3 of both strands, and protects the DNA from cleavage by the FokI endonuclease. In Planomicrobium okeanokoites (Planococcus okeanokoites), this protein is Type II methyltransferase M.FokI.